The following is a 102-amino-acid chain: Small ribosomal subunit protein uS10 (102 aa).

The protein belongs to the universal ribosomal protein uS10 family. As to quaternary structure, part of the 30S ribosomal subunit.

Involved in the binding of tRNA to the ribosomes. The protein is Small ribosomal subunit protein uS10 of Myxococcus xanthus (strain DK1622).